The following is a 192-amino-acid chain: Ubiquitin-conjugating enzyme E2 1 (192 aa).

Residues Met1–Pro28 are disordered. The UBC core domain maps to Pro4 to Leu150. The Glycyl thioester intermediate role is filled by Cys88. The interval Ala171–Ala192 is disordered.

It belongs to the ubiquitin-conjugating enzyme family. In terms of assembly, interacts with ubr-1 and rfp-1. Interacts with ubc-13.

The enzyme catalyses S-ubiquitinyl-[E1 ubiquitin-activating enzyme]-L-cysteine + [E2 ubiquitin-conjugating enzyme]-L-cysteine = [E1 ubiquitin-activating enzyme]-L-cysteine + S-ubiquitinyl-[E2 ubiquitin-conjugating enzyme]-L-cysteine.. Its pathway is protein modification; protein ubiquitination. Its function is as follows. Catalyzes the covalent attachment of ubiquitin to other proteins. This chain is Ubiquitin-conjugating enzyme E2 1 (ubc-1), found in Caenorhabditis elegans.